A 61-amino-acid chain; its full sequence is Large ribosomal subunit protein bL32 (61 aa).

Belongs to the bacterial ribosomal protein bL32 family.

The polypeptide is Large ribosomal subunit protein bL32 (Acidithiobacillus ferrooxidans (strain ATCC 23270 / DSM 14882 / CIP 104768 / NCIMB 8455) (Ferrobacillus ferrooxidans (strain ATCC 23270))).